We begin with the raw amino-acid sequence, 742 residues long: Clamp-binding protein CrfC (742 aa).

The tract at residues 41–45 (QLALP) is clamp-binding consensus. Residues 66–402 (SRLEMVLAIV…LWEDSLFAQP (337 aa)) form the Dynamin-type G domain. A G1 motif region spans residues 76-83 (GTMKAGKS). Residues 102–104 (MTA) are G2 motif. The tract at residues 236 to 239 (DTPG) is G3 motif. A G4 motif region spans residues 297–300 (NKFD). The G5 motif stretch occupies residues 331–334 (FPVS). Residues 440 to 472 (RAHGLNVACEQLRQNIHQVEESLQLLQLNQAQV) adopt a coiled-coil conformation.

Belongs to the TRAFAC class dynamin-like GTPase superfamily. Dynamin/Fzo/YdjA family. Forms homooligomers. Binds to the beta sliding clamp processivity factor (DnaN) in the presence and absence of DNA, may bind to the clamp itself as homodimers or trimers. Homooligomers may be able to bind more than 1 clamp complex.

Its subcellular location is the cytoplasm. In terms of biological role, important for the colocalization of sister nascent DNA strands after replication fork passage during DNA replication, and for positioning and subsequent partitioning of sister chromosomes. Does not have GTPase activity on its own. The protein is Clamp-binding protein CrfC (crfC) of Escherichia coli.